A 179-amino-acid polypeptide reads, in one-letter code: Viral interleukin-10 homolog (179 aa).

Residues 1–18 form the signal peptide; that stretch reads MFRASLLCCLVLLAGVWA. 2 disulfides stabilise this stretch: Cys-30-Cys-127 and Cys-80-Cys-133. Asn-100 and Asn-135 each carry an N-linked (GlcNAc...) asparagine; by host glycan.

This sequence belongs to the IL-10 family.

Its subcellular location is the secreted. Its function is as follows. Down-regulates the expression of the TAP1 gene (transporter associated with antigen processing), thereby affecting the transport of peptides into the endoplasmic reticulum and subsequent peptide loading by MHC class I molecules. In consequence, infected cells are masked for immune recognition by cytotoxic T-lymphocytes. This is Viral interleukin-10 homolog from Equus caballus (Horse).